Here is a 324-residue protein sequence, read N- to C-terminus: D-alanine--D-alanine ligase (324 aa).

One can recognise an ATP-grasp domain in the interval 121 to 321 (NQYLKAFGVR…IKDVMTDIIE (201 aa)). 149–204 (VEKIGLPCFIKPNLGGSSFGVTKVKTREQIQPAIAKAFSEAEEVMIEAFMGGTELT) contributes to the ATP binding site. Mg(2+) contacts are provided by Asp275, Glu288, and Asn290.

It belongs to the D-alanine--D-alanine ligase family. Mg(2+) serves as cofactor. It depends on Mn(2+) as a cofactor.

It localises to the cytoplasm. It carries out the reaction 2 D-alanine + ATP = D-alanyl-D-alanine + ADP + phosphate + H(+). It participates in cell wall biogenesis; peptidoglycan biosynthesis. In terms of biological role, cell wall formation. The protein is D-alanine--D-alanine ligase of Bacteroides fragilis (strain YCH46).